The following is a 101-amino-acid chain: MFAIVKTGGKQYRVEPGLKLRVEKLDAEPGATVELPVLLLGGEKTVVGTPVVEGASVVAEVLGHGRGKKILVSKFKAKVQYRRKKGHRQPYTELLIKEIRG.

The protein belongs to the bacterial ribosomal protein bL21 family. As to quaternary structure, part of the 50S ribosomal subunit. Contacts protein L20.

Functionally, this protein binds to 23S rRNA in the presence of protein L20. This chain is Large ribosomal subunit protein bL21, found in Thermus thermophilus (strain ATCC BAA-163 / DSM 7039 / HB27).